Reading from the N-terminus, the 436-residue chain is ATP-dependent protease ATPase subunit HslU (436 aa).

Residues V18, 60 to 65, D249, E314, and R386 contribute to the ATP site; that span reads GVGKTE.

It belongs to the ClpX chaperone family. HslU subfamily. In terms of assembly, a double ring-shaped homohexamer of HslV is capped on each side by a ring-shaped HslU homohexamer. The assembly of the HslU/HslV complex is dependent on binding of ATP.

It is found in the cytoplasm. Its function is as follows. ATPase subunit of a proteasome-like degradation complex; this subunit has chaperone activity. The binding of ATP and its subsequent hydrolysis by HslU are essential for unfolding of protein substrates subsequently hydrolyzed by HslV. HslU recognizes the N-terminal part of its protein substrates and unfolds these before they are guided to HslV for hydrolysis. The chain is ATP-dependent protease ATPase subunit HslU from Rhizobium rhizogenes (strain K84 / ATCC BAA-868) (Agrobacterium radiobacter).